Reading from the N-terminus, the 369-residue chain is DNA polymerase processivity factor (369 aa).

A disordered region spans residues 345-369 (IGSRKRGPSSPPFEREGKLAKVINQ).

The protein belongs to the herpesviridae DNA polymerase processivity factor family. In terms of assembly, interacts with the DNA polymerase catalytic subunit. Interacts with the origin-binding protein.

It localises to the host nucleus. Its function is as follows. Plays an essential role in viral DNA replication by acting as the polymerase accessory subunit. Associates with the viral polymerase to increase its processivity and forms high-affinity direct interactions with DNA. Facilitates the origin-binding protein UL9 loading onto DNA thus increasing its ability to assemble into a functional complex capable of unwinding duplex DNA. In Gallus gallus (Chicken), this protein is DNA polymerase processivity factor (MDV055).